The following is a 264-amino-acid chain: Thymidylate synthase (264 aa).

DUMP is bound at residue Arg21. Residue His51 participates in (6R)-5,10-methylene-5,6,7,8-tetrahydrofolate binding. Position 126–127 (126–127) interacts with dUMP; that stretch reads RR. Residue Cys146 is the Nucleophile of the active site. Residues 166–169, Asn177, and 207–209 each bind dUMP; these read RSAD and HLY. Asp169 contacts (6R)-5,10-methylene-5,6,7,8-tetrahydrofolate. Residue Ala263 participates in (6R)-5,10-methylene-5,6,7,8-tetrahydrofolate binding.

It belongs to the thymidylate synthase family. Bacterial-type ThyA subfamily. Homodimer.

It localises to the cytoplasm. The catalysed reaction is dUMP + (6R)-5,10-methylene-5,6,7,8-tetrahydrofolate = 7,8-dihydrofolate + dTMP. It functions in the pathway pyrimidine metabolism; dTTP biosynthesis. Catalyzes the reductive methylation of 2'-deoxyuridine-5'-monophosphate (dUMP) to 2'-deoxythymidine-5'-monophosphate (dTMP) while utilizing 5,10-methylenetetrahydrofolate (mTHF) as the methyl donor and reductant in the reaction, yielding dihydrofolate (DHF) as a by-product. This enzymatic reaction provides an intracellular de novo source of dTMP, an essential precursor for DNA biosynthesis. This is Thymidylate synthase from Legionella pneumophila subsp. pneumophila (strain Philadelphia 1 / ATCC 33152 / DSM 7513).